We begin with the raw amino-acid sequence, 340 residues long: tRNA N6-adenosine threonylcarbamoyltransferase (340 aa).

Residues His113 and His117 each coordinate Fe cation. Substrate-binding positions include Leu135–Gly139, Asp169, Gly182, Asp186, and Asn274. Asp302 provides a ligand contact to Fe cation.

It belongs to the KAE1 / TsaD family. It depends on Fe(2+) as a cofactor.

It is found in the cytoplasm. It carries out the reaction L-threonylcarbamoyladenylate + adenosine(37) in tRNA = N(6)-L-threonylcarbamoyladenosine(37) in tRNA + AMP + H(+). Its function is as follows. Required for the formation of a threonylcarbamoyl group on adenosine at position 37 (t(6)A37) in tRNAs that read codons beginning with adenine. Is involved in the transfer of the threonylcarbamoyl moiety of threonylcarbamoyl-AMP (TC-AMP) to the N6 group of A37, together with TsaE and TsaB. TsaD likely plays a direct catalytic role in this reaction. This Mycolicibacterium smegmatis (strain ATCC 700084 / mc(2)155) (Mycobacterium smegmatis) protein is tRNA N6-adenosine threonylcarbamoyltransferase.